The following is a 389-amino-acid chain: GTPase Obg (389 aa).

The Obg domain maps to 1-159 (MKFVDEAVIR…RSLKLELLLL (159 aa)). One can recognise an OBG-type G domain in the interval 160-333 (ADVGLLGMPN…LALKLLDYIA (174 aa)). GTP contacts are provided by residues 166–173 (GMPNAGKS), 191–195 (FTTLV), 213–216 (DIPG), 283–286 (NKTD), and 314–316 (SAY). The Mg(2+) site is built by Ser173 and Thr193.

Belongs to the TRAFAC class OBG-HflX-like GTPase superfamily. OBG GTPase family. Monomer. Mg(2+) serves as cofactor.

It localises to the cytoplasm. In terms of biological role, an essential GTPase which binds GTP, GDP and possibly (p)ppGpp with moderate affinity, with high nucleotide exchange rates and a fairly low GTP hydrolysis rate. Plays a role in control of the cell cycle, stress response, ribosome biogenesis and in those bacteria that undergo differentiation, in morphogenesis control. This Shewanella baltica (strain OS223) protein is GTPase Obg.